A 1976-amino-acid polypeptide reads, in one-letter code: Myosin-10 (1976 aa).

Arg-18 carries the post-translational modification Omega-N-methylarginine. One can recognise a Myosin N-terminal SH3-like domain in the interval 31 to 81 (TAKKLVWIPSERHGFEAASIKEERGDEVLVELAENGKKAMVNKDDIQKMNP). Residues 85 to 783 (SKVEDMAELT…VLAHLEEERD (699 aa)) enclose the Myosin motor domain. 178–185 (GESGAGKT) contacts ATP. Lys-442 is subject to N6-acetyllysine. The actin-binding stretch occupies residues 661–683 (LTKLMATLRNTNPNFVRCIIPNH). Positions 786-815 (ITDIIIFFQAVCRGYLARKAFAKKQQQLSA) constitute an IQ domain. Residues 845–1976 (LQVTRQEEEL…INETQPPQSE (1132 aa)) adopt a coiled-coil conformation. The disordered stretch occupies residues 1126-1149 (DFESEKASRNKAEKQKRDLSEELE). Basic and acidic residues predominate over residues 1129-1149 (SEKASRNKAEKQKRDLSEELE). Ser-1145 bears the Phosphoserine mark. An N6-acetyllysine mark is found at Lys-1241, Lys-1301, and Lys-1645. Disordered stretches follow at residues 1697 to 1718 (ASSE…DEIA) and 1874 to 1976 (KANA…PQSE). Residues 1698 to 1708 (SSERARRHAEQ) are compositionally biased toward basic and acidic residues. Arg-1930 carries the post-translational modification Omega-N-methylarginine. Ser-1935, Ser-1937, Ser-1938, and Ser-1939 each carry phosphoserine. Arg-1940 carries the post-translational modification Omega-N-methylarginine. A phosphoserine mark is found at Ser-1952 and Ser-1956. Thr-1960 carries the post-translational modification Phosphothreonine. A compositionally biased stretch (polar residues) spans 1967 to 1976 (INETQPPQSE). Ser-1975 is subject to Phosphoserine.

This sequence belongs to the TRAFAC class myosin-kinesin ATPase superfamily. Myosin family. As to quaternary structure, myosin is a hexameric protein that consists of 2 heavy chain subunits (MHC), 2 alkali light chain subunits (MLC) and 2 regulatory light chain subunits (MLC-2). Interacts with PLEKHG6. Interacts with ECPAS. Interacts with KIF26B. Interacts with LARP6. Interacts with MCC. Interacts with CFAP95. In terms of processing, phosphorylated by ABL2.

The protein resides in the cell projection. The protein localises to the lamellipodium. Cellular myosin that appears to play a role in cytokinesis, cell shape, and specialized functions such as secretion and capping. Involved with LARP6 in the stabilization of type I collagen mRNAs for CO1A1 and CO1A2. During cell spreading, plays an important role in cytoskeleton reorganization, focal contacts formation (in the central part but not the margins of spreading cells), and lamellipodial extension; this function is mechanically antagonized by MYH9. This chain is Myosin-10 (MYH10), found in Bos taurus (Bovine).